A 264-amino-acid polypeptide reads, in one-letter code: ELL-associated factor 2 (264 aa).

Disordered regions lie at residues 114-154 and 169-264; these read EGSS…PSSP and MDQL…DSDD. The segment covering 117–142 has biased composition (polar residues); it reads SKVQSRIEQQQQQIRNSSKTPNNIKN. Low complexity predominate over residues 173-196; it reads SSSDSSSDSKSSSSSSSSSENSSS. Basic and acidic residues predominate over residues 228–238; that stretch reads VPDKDASHNRS. Polar residues predominate over residues 239-264; that stretch reads QENSGHMMNTLRSDLQLSESGSDSDD.

Belongs to the EAF family.

It localises to the nucleus speckle. Its function is as follows. May act as a transcriptional transactivator. This chain is ELL-associated factor 2 (EAF2), found in Gallus gallus (Chicken).